We begin with the raw amino-acid sequence, 382 residues long: Mannitol-1-phosphate 5-dehydrogenase (382 aa).

An NAD(+)-binding site is contributed by 3 to 14 (ALHFGAGNIGRG). An N6-acetyllysine modification is found at Lys269.

The protein belongs to the mannitol dehydrogenase family.

It carries out the reaction D-mannitol 1-phosphate + NAD(+) = beta-D-fructose 6-phosphate + NADH + H(+). This chain is Mannitol-1-phosphate 5-dehydrogenase, found in Escherichia coli O139:H28 (strain E24377A / ETEC).